The sequence spans 265 residues: Orotidine 5'-phosphate decarboxylase (265 aa).

Residues aspartate 37, 59 to 61, 91 to 100, tyrosine 217, and arginine 235 each bind substrate; these read KTH and DRKFADIGNT. Lysine 93 serves as the catalytic Proton donor.

Belongs to the OMP decarboxylase family.

It carries out the reaction orotidine 5'-phosphate + H(+) = UMP + CO2. Its pathway is pyrimidine metabolism; UMP biosynthesis via de novo pathway; UMP from orotate: step 2/2. The chain is Orotidine 5'-phosphate decarboxylase (URA3) from Diutina rugosa (Yeast).